The sequence spans 119 residues: Aspartate 1-decarboxylase (119 aa).

The active-site Schiff-base intermediate with substrate; via pyruvic acid is S25. A Pyruvic acid (Ser) modification is found at S25. T57 contributes to the substrate binding site. Y58 serves as the catalytic Proton donor. G73–A75 is a substrate binding site.

Belongs to the PanD family. Heterooctamer of four alpha and four beta subunits. Pyruvate serves as cofactor. Is synthesized initially as an inactive proenzyme, which is activated by self-cleavage at a specific serine bond to produce a beta-subunit with a hydroxyl group at its C-terminus and an alpha-subunit with a pyruvoyl group at its N-terminus.

Its subcellular location is the cytoplasm. It carries out the reaction L-aspartate + H(+) = beta-alanine + CO2. Its pathway is cofactor biosynthesis; (R)-pantothenate biosynthesis; beta-alanine from L-aspartate: step 1/1. In terms of biological role, catalyzes the pyruvoyl-dependent decarboxylation of aspartate to produce beta-alanine. In Thermosipho melanesiensis (strain DSM 12029 / CIP 104789 / BI429), this protein is Aspartate 1-decarboxylase.